The chain runs to 250 residues: Uracil-DNA glycosylase (250 aa).

Residue D78 is the Proton acceptor of the active site.

Belongs to the uracil-DNA glycosylase (UDG) superfamily. UNG family.

The protein resides in the cytoplasm. The catalysed reaction is Hydrolyzes single-stranded DNA or mismatched double-stranded DNA and polynucleotides, releasing free uracil.. Functionally, excises uracil residues from the DNA which can arise as a result of misincorporation of dUMP residues by DNA polymerase or due to deamination of cytosine. The protein is Uracil-DNA glycosylase of Albidiferax ferrireducens (strain ATCC BAA-621 / DSM 15236 / T118) (Rhodoferax ferrireducens).